A 277-amino-acid polypeptide reads, in one-letter code: Ribosome-inactivating protein luffin-alpha (277 aa).

Residues 1–19 form the signal peptide; sequence MKRFTVLILAIFVAASTVE. The active site involves E179.

This sequence belongs to the ribosome-inactivating protein family. Type 1 RIP subfamily.

The enzyme catalyses Endohydrolysis of the N-glycosidic bond at one specific adenosine on the 28S rRNA.. This is Ribosome-inactivating protein luffin-alpha from Luffa aegyptiaca (Sponge gourd).